A 605-amino-acid polypeptide reads, in one-letter code: uncharacterized protein (605 aa).

The chain crosses the membrane as a helical span at residues Ile-56 to Phe-78.

It localises to the cell membrane. This is an uncharacterized protein from Bacillus subtilis (strain 168).